The chain runs to 714 residues: Probable serine/threonine-protein kinase mkcB (714 aa).

Positions 1–12 (MKSILKKAKHFF) are enriched in basic residues. 2 disordered regions span residues 1–267 (MKSI…SSTS) and 281–349 (GSGS…EQKP). Over residues 23–35 (GGEKTAKESESQQ) the composition is skewed to basic and acidic residues. Over residues 62–83 (SQSQPTTSALQTSTSLQPSSSL) the composition is skewed to low complexity. Positions 84–94 (HQIPQSQSSLE) are enriched in polar residues. Composition is skewed to low complexity over residues 95–111 (LTTNPTQQLPTTPTKQL) and 120–166 (PHSQ…TLTT). Polar residues predominate over residues 167-177 (PVPSSENLATL). 2 stretches are compositionally biased toward low complexity: residues 178 to 241 (STST…QEQT) and 254 to 267 (LSQSTTSSSTSSTS). Residues 282-294 (SGSTKNKDSSSAP) show a composition bias toward polar residues. Low complexity-rich tracts occupy residues 300–314 (NNNNNTVSSSNKNRS) and 324–337 (NNNNNNQNNHKNNN). The 250-residue stretch at 438–687 (YKDSDQVGKG…AEELLKHPFI (250 aa)) folds into the Protein kinase domain. ATP is bound by residues 444-452 (VGKGGFGTV) and lysine 467. Aspartate 558 (proton acceptor) is an active-site residue.

Belongs to the protein kinase superfamily. STE Ser/Thr protein kinase family. STE20 subfamily. The cofactor is Mg(2+). As to expression, expressed at equal levels in prestalk and prespore cells.

It catalyses the reaction L-seryl-[protein] + ATP = O-phospho-L-seryl-[protein] + ADP + H(+). The catalysed reaction is L-threonyl-[protein] + ATP = O-phospho-L-threonyl-[protein] + ADP + H(+). The sequence is that of Probable serine/threonine-protein kinase mkcB from Dictyostelium discoideum (Social amoeba).